Here is an 888-residue protein sequence, read N- to C-terminus: Pumilio homology domain family member 4 (888 aa).

Thr-205, Thr-212, and Thr-252 each carry phosphothreonine. Disordered stretches follow at residues 236–270 (KAKK…IPPT) and 467–551 (MNSA…RKIE). Polar residues predominate over residues 243–270 (GANNTAKTRTQSISFDNTPSSTSFIPPT). Ser-256 carries the phosphoserine modification. Composition is skewed to low complexity over residues 478-499 (NNNS…YNNK) and 521-543 (NNNN…NSNS). Residues 539–888 (TNSNSAEKQR…RIIGMLHLDS (350 aa)) form the PUM-HD domain. 8 Pumilio repeats span residues 563 to 598 (QYIG…AIFE), 599 to 634 (ETKD…VLTK), 635 to 671 (ISSP…IVVD), 672 to 707 (SLRP…FIFD), 708 to 743 (AISD…NLCD), 744 to 783 (KLLA…KIVH), 784 to 821 (LLKP…EILN), and 823 to 861 (GGET…RLSE).

In terms of biological role, is not essential for haploid growth, but may affect diploid formation. This chain is Pumilio homology domain family member 4 (PUF4), found in Saccharomyces cerevisiae (strain ATCC 204508 / S288c) (Baker's yeast).